The chain runs to 438 residues: Telomeric repeat-binding factor 1 (438 aa).

Over residues 1-10 the composition is skewed to polar residues; sequence MAEDVSSTAP. The interval 1 to 36 is disordered; that stretch reads MAEDVSSTAPSPRGCADGRDADPTEEQMAQTQRNDQ. Alanine 2 carries the N-acetylalanine modification. At serine 11 the chain carries Phosphoserine. Positions 58–268 are TRFH dimerization; sequence EEEEEDSGLV…AAAKVVESKR (211 aa). Lysine 213 is covalently cross-linked (Glycyl lysine isopeptide (Lys-Gly) (interchain with G-Cter in SUMO2)). Serine 219 is subject to Phosphoserine; by ATM. The interval 265–378 is interaction with RLIM; that stretch reads ESKRTRTITS…PVTPEKHRAR (114 aa). The interval 268–311 is disordered; that stretch reads RTRTITSQDKPSGNDVEMETEANLDTRKSVSDKQSAVTESSEGT. Residues 299–311 are compositionally biased toward polar residues; it reads DKQSAVTESSEGT. Lysine 325 participates in a covalent cross-link: Glycyl lysine isopeptide (Lys-Gly) (interchain with G-Cter in SUMO2). The segment at 326-375 is disordered; the sequence is LQHGTQQQDLNKKERRVGTPQSTKKKKESRRATESRIPVSKSQPVTPEKH. Positions 337–356 match the Nuclear localization signal motif; that stretch reads KKERRVGTPQSTKKKKESRR. Lysine 366 participates in a covalent cross-link: Glycyl lysine isopeptide (Lys-Gly) (interchain with G-Cter in SUMO2). Positions 375–432 constitute an HTH myb-type domain; sequence HRARKRQAWLWEEDKNLRSGVRKYGEGNWSKILLHYKFNNRTSVMLKDRWRTMKKLKL. A DNA-binding region (H-T-H motif) is located at residues 403–428; sequence WSKILLHYKFNNRTSVMLKDRWRTMK.

As to quaternary structure, homodimer; can contain both isoforms. Found in a complex with POT1; TINF2 and TNKS1. Interacts with ATM, TINF2, TNKS1, TNKS2, PINX1, NEK2 and MAPRE1. Component of the shelterin complex (telosome) composed of TERF1, TERF2, TINF2, TERF2IP ACD and POT1. Interacts with RLIM (via N-terminus). Interacts with FBXO4. Interaction with TINF2 protects against interaction with FBXO4 and subsequent polyubiquitination and proteasomal degradation. Interacts with GNL3L; this interaction promotes homodimerization. Interacts with TIN2. Interactions with GNL3L and TIN2 are mutually exclusive. Interacts with RTEL1. Interacts with CCDC79/TERB1. Post-translationally, phosphorylated preferentially on Ser-219 in an ATM-dependent manner in response to ionizing DNA damage. ADP-ribosylation by TNKS1 or TNKS2 diminishes its ability to bind to telomeric DNA. In terms of processing, ubiquitinated by RLIM/RNF12, leading to its degradation by the proteasome. Ubiquitinated by a SCF (SKP1-CUL1-F-box protein) ubiquitin-protein ligase complex, leading to its degradation by the proteasome.

It is found in the nucleus. The protein localises to the chromosome. The protein resides in the telomere. Its subcellular location is the cytoplasm. It localises to the cytoskeleton. It is found in the spindle. Functionally, binds the telomeric double-stranded 5'-TTAGGG-3' repeat and negatively regulates telomere length. Involved in the regulation of the mitotic spindle. Component of the shelterin complex (telosome) that is involved in the regulation of telomere length and protection. Shelterin associates with arrays of double-stranded 5'-TTAGGG-3' repeats added by telomerase and protects chromosome ends; without its protective activity, telomeres are no longer hidden from the DNA damage surveillance and chromosome ends are inappropriately processed by DNA repair pathways. The polypeptide is Telomeric repeat-binding factor 1 (TERF1) (Cricetulus griseus (Chinese hamster)).